The following is a 65-amino-acid chain: Large ribosomal subunit protein bL35c (65 aa).

It belongs to the bacterial ribosomal protein bL35 family.

The protein resides in the plastid. It is found in the cyanelle. This is Large ribosomal subunit protein bL35c (rpl35) from Cyanophora paradoxa.